We begin with the raw amino-acid sequence, 493 residues long: Probable cytosol aminopeptidase (493 aa).

Positions 258 and 263 each coordinate Mn(2+). Lys270 is a catalytic residue. 3 residues coordinate Mn(2+): Asp281, Asp340, and Glu342. The active site involves Arg344.

The protein belongs to the peptidase M17 family. It depends on Mn(2+) as a cofactor.

It localises to the cytoplasm. The enzyme catalyses Release of an N-terminal amino acid, Xaa-|-Yaa-, in which Xaa is preferably Leu, but may be other amino acids including Pro although not Arg or Lys, and Yaa may be Pro. Amino acid amides and methyl esters are also readily hydrolyzed, but rates on arylamides are exceedingly low.. The catalysed reaction is Release of an N-terminal amino acid, preferentially leucine, but not glutamic or aspartic acids.. In terms of biological role, presumably involved in the processing and regular turnover of intracellular proteins. Catalyzes the removal of unsubstituted N-terminal amino acids from various peptides. This Caulobacter vibrioides (strain ATCC 19089 / CIP 103742 / CB 15) (Caulobacter crescentus) protein is Probable cytosol aminopeptidase.